The following is a 205-amino-acid chain: Dephospho-CoA kinase (205 aa).

The region spanning K3–Q204 is the DPCK domain. G11 to E16 provides a ligand contact to ATP.

This sequence belongs to the CoaE family.

Its subcellular location is the cytoplasm. It carries out the reaction 3'-dephospho-CoA + ATP = ADP + CoA + H(+). Its pathway is cofactor biosynthesis; coenzyme A biosynthesis; CoA from (R)-pantothenate: step 5/5. In terms of biological role, catalyzes the phosphorylation of the 3'-hydroxyl group of dephosphocoenzyme A to form coenzyme A. The chain is Dephospho-CoA kinase from Streptomyces avermitilis (strain ATCC 31267 / DSM 46492 / JCM 5070 / NBRC 14893 / NCIMB 12804 / NRRL 8165 / MA-4680).